The primary structure comprises 338 residues: TPR repeat-containing protein MJ0941 (338 aa).

TPR repeat units lie at residues 27-62, 63-96, 97-130, 131-164, 165-198, 199-232, 268-301, and 302-335; these read LEAV…EPDF, YLAL…ESKN, PITW…ENRF, LSAF…TPNF, VPMW…KPHD, KNAL…LNVK, VALW…QPHY, and IKAL…IHKD.

In Methanocaldococcus jannaschii (strain ATCC 43067 / DSM 2661 / JAL-1 / JCM 10045 / NBRC 100440) (Methanococcus jannaschii), this protein is TPR repeat-containing protein MJ0941.